We begin with the raw amino-acid sequence, 367 residues long: Peptide chain release factor 2 (367 aa).

An N5-methylglutamine modification is found at glutamine 254.

This sequence belongs to the prokaryotic/mitochondrial release factor family. Post-translationally, methylated by PrmC. Methylation increases the termination efficiency of RF2.

The protein resides in the cytoplasm. In terms of biological role, peptide chain release factor 2 directs the termination of translation in response to the peptide chain termination codons UGA and UAA. The polypeptide is Peptide chain release factor 2 (Neisseria meningitidis serogroup B (strain ATCC BAA-335 / MC58)).